Reading from the N-terminus, the 138-residue chain is Basic phospholipase A2 PLA-N (138 aa).

Positions 1–16 (MRTLWIMAVLLVGVEG) are cleaved as a signal peptide. Disulfide bonds link Cys42–Cys131, Cys44–Cys60, Cys59–Cys111, Cys65–Cys138, Cys66–Cys104, Cys73–Cys97, and Cys91–Cys102. Residues Tyr43, Gly45, and Gly47 each contribute to the Ca(2+) site. The active site involves His63. Asp64 contacts Ca(2+). The active site involves Asp105.

Belongs to the phospholipase A2 family. Group II subfamily. D49 sub-subfamily. The cofactor is Ca(2+). In terms of tissue distribution, expressed by the venom gland.

The protein resides in the secreted. The enzyme catalyses a 1,2-diacyl-sn-glycero-3-phosphocholine + H2O = a 1-acyl-sn-glycero-3-phosphocholine + a fatty acid + H(+). Snake venom phospholipase A2 (PLA2) that displays edema-inducing activities, as well as presynaptic neurotoxicity and myotoxicity. PLA2 catalyzes the calcium-dependent hydrolysis of the 2-acyl groups in 3-sn-phosphoglycerides. The chain is Basic phospholipase A2 PLA-N from Protobothrops flavoviridis (Habu).